Consider the following 218-residue polypeptide: UPF0329 protein ECU10_1860 (218 aa).

It belongs to the UPF0329 family.

The protein is UPF0329 protein ECU10_1860 of Encephalitozoon cuniculi (strain GB-M1) (Microsporidian parasite).